The following is a 432-amino-acid chain: Tyrosine--tRNA ligase (432 aa).

The short motif at 46 to 55 is the 'HIGH' region element; that stretch reads PTRPDLHLGH. The 'KMSKS' region motif lies at 232 to 236; the sequence is KMSKS. ATP is bound at residue Lys235. An S4 RNA-binding domain is found at 369–430; sequence IWVARLFTLA…GKDRFVRVRL (62 aa).

This sequence belongs to the class-I aminoacyl-tRNA synthetase family. TyrS type 2 subfamily. Homodimer.

The protein localises to the cytoplasm. It catalyses the reaction tRNA(Tyr) + L-tyrosine + ATP = L-tyrosyl-tRNA(Tyr) + AMP + diphosphate + H(+). Catalyzes the attachment of tyrosine to tRNA(Tyr) in a two-step reaction: tyrosine is first activated by ATP to form Tyr-AMP and then transferred to the acceptor end of tRNA(Tyr). In Thermus thermophilus (strain ATCC BAA-163 / DSM 7039 / HB27), this protein is Tyrosine--tRNA ligase.